Reading from the N-terminus, the 168-residue chain is Gamma-glutamylaminecyclotransferase (168 aa).

Positions 1–20 are disordered; the sequence is MPGPECKWSTTETGAPCGTD. Position 32-35 (32-35) interacts with substrate; sequence YGTL. Glutamate 107 functions as the Proton acceptor in the catalytic mechanism.

The protein belongs to the gamma-glutamylcyclotransferase family. In terms of assembly, monomer.

The enzyme catalyses epsilon-(gamma-L-glutamyl)-L-lysine = 5-oxo-L-proline + L-lysine. Contributes to degradation of proteins cross-linked by transglutaminases by degrading the cross-link between a lysine and a glutamic acid residue. Catalyzes the formation of 5-oxo-L-proline from L-gamma-glutamyl-L-epsilon-lysine. Inactive with L-gamma-glutamyl-alpha-amino acid substrates such as L-gamma-glutamyl-L-alpha-cysteine and L-gamma-glutamyl-L-alpha-alanine. The polypeptide is Gamma-glutamylaminecyclotransferase (GGACT) (Bos taurus (Bovine)).